The chain runs to 984 residues: uncharacterized protein (984 aa).

Residues 941-984 are disordered; that stretch reads FGPSGPGPNQGPGDDYNNFKSTKYPRNGYNKYQPNNRIHSRNRY.

It is found in the virion. This is an uncharacterized protein from Acanthamoeba polyphaga (Amoeba).